We begin with the raw amino-acid sequence, 333 residues long: tRNA uridine(34) hydroxylase (333 aa).

The 95-residue stretch at 123–217 (SDPEVILVDT…YLEEIKQEES (95 aa)) folds into the Rhodanese domain. The active-site Cysteine persulfide intermediate is Cys-177.

It belongs to the TrhO family.

The enzyme catalyses uridine(34) in tRNA + AH2 + O2 = 5-hydroxyuridine(34) in tRNA + A + H2O. Functionally, catalyzes oxygen-dependent 5-hydroxyuridine (ho5U) modification at position 34 in tRNAs. This chain is tRNA uridine(34) hydroxylase, found in Shewanella sp. (strain MR-7).